We begin with the raw amino-acid sequence, 339 residues long: Annexin A2 (339 aa).

N-acetylserine is present on S2. The tract at residues S2 to Y24 is S100A10-binding site. Position 24 is a phosphotyrosine; by SRC (Y24). A Phosphoserine; by PKC modification is found at S26. Annexin repeat units lie at residues F33–K104 and T105–K176. K49 carries the post-translational modification N6-acetyllysine; alternate. K49 participates in a covalent cross-link: Glycyl lysine isopeptide (Lys-Gly) (interchain with G-Cter in SUMO1); alternate. K49 participates in a covalent cross-link: Glycyl lysine isopeptide (Lys-Gly) (interchain with G-Cter in SUMO2); alternate. At K152 the chain carries N6-acetyllysine. S184 is modified (phosphoserine). Annexin repeat units lie at residues E189 to Q261 and N265 to G336. Residue Y199 is modified to Phosphotyrosine. N6-acetyllysine is present on K227.

This sequence belongs to the annexin family. As to quaternary structure, heterotetramer containing 2 light chains of S100A10/p11 and 2 heavy chains of ANXA2/p36. Interacts with ATP1B1. Interacts with DYSF. Interacts with COCH. Interacts (via repeat Annexin 1) with PCSK9 (via the C-terminal domain); the interaction inhibits the degradation of LDLR. Interacts with CEACAM1 (via the cytoplasmic domain); this interaction is regulated by phosphorylation of CEACAM1. Interacts with APPL2 and APPL1; targets APPL2 to endosomes and acting in parallel to RAB5A. Interacts with S100A4. May interact with UBAP2. Interacts with PLEKHG4B; this interaction is required for PLEKHG4B localization to cell-cell adhesions. (Microbial infection) Interacts with classical swine fever virus envelope glycoprotein E2. In terms of processing, ISGylated.

It is found in the secreted. It localises to the extracellular space. The protein resides in the extracellular matrix. Its subcellular location is the basement membrane. The protein localises to the melanosome. Its function is as follows. Calcium-regulated membrane-binding protein whose affinity for calcium is greatly enhanced by anionic phospholipids. It binds two calcium ions with high affinity. May be involved in heat-stress response. Inhibits PCSK9-enhanced LDLR degradation, probably reduces PCSK9 protein levels via a translational mechanism but also competes with LDLR for binding with PCSK9. Binds to endosomes damaged by phagocytosis of particulate wear debris and participates in endosomal membrane stabilization, thereby limiting NLRP3 inflammasome activation. Required for endothelial cell surface plasmin generation and may support fibrinolytic surveillance and neoangiogenesis. (Microbial infection) May serve as a receptor for classical swine fever virus (CSFV). Promotes CSFV infection. The polypeptide is Annexin A2 (ANXA2) (Sus scrofa (Pig)).